A 257-amino-acid polypeptide reads, in one-letter code: tRNA pseudouridine synthase A (257 aa).

The Nucleophile role is filled by Asp52. A substrate-binding site is contributed by Tyr111.

The protein belongs to the tRNA pseudouridine synthase TruA family. In terms of assembly, homodimer.

The enzyme catalyses uridine(38/39/40) in tRNA = pseudouridine(38/39/40) in tRNA. Functionally, formation of pseudouridine at positions 38, 39 and 40 in the anticodon stem and loop of transfer RNAs. This Cereibacter sphaeroides (strain ATCC 17025 / ATH 2.4.3) (Rhodobacter sphaeroides) protein is tRNA pseudouridine synthase A.